The sequence spans 1537 residues: Histone-lysine N-methyltransferase, H3 lysine-79 specific (1537 aa).

A DOT1 domain is found at 16 to 330 (EPAVYPWPLP…ILENYFSSLK (315 aa)). S-adenosyl-L-methionine contacts are provided by residues 136–139 (YGET), 159–168 (FVDLGSGVGQ), glutamate 186, and 222–223 (DF). The residue at position 297 (serine 297) is a Phosphoserine. The segment covering 334–350 (LREEQEAARRRQQRESK) has biased composition (basic and acidic residues). The tract at residues 334–467 (LREEQEAARR…SPFYQLPPSV (134 aa)) is disordered. Serine 374 carries the phosphoserine modification. Residues 391–416 (PSKARKKKLNKKGRKMAGRKRGRPKK) form a required for interaction with nucleosomes and DNA region. The segment covering 393 to 416 (KARKKKLNKKGRKMAGRKRGRPKK) has biased composition (basic residues). Polar residues predominate over residues 439-450 (QTVSQTAASSPQ). 2 positions are modified to phosphoserine: serine 448 and serine 471. At threonine 480 the chain carries Phosphothreonine. Serine 775 and serine 786 each carry phosphoserine. 4 disordered regions span residues 785 to 853 (LSQD…LRER), 893 to 912 (RAER…DPSS), 957 to 1128 (TPGA…LNLN), and 1145 to 1243 (SPET…KWKS). A compositionally biased stretch (basic and acidic residues) spans 800–809 (LHSRAEHTKE). Position 826 is a phosphoserine (serine 826). At serine 834 the chain carries Phosphoserine; by MAPK11. Residues 844 to 853 (KSSEKGLRER) are compositionally biased toward basic and acidic residues. Polar residues-rich tracts occupy residues 899–912 (STPS…DPSS), 966–986 (DESS…STPQ), and 994–1010 (PRNS…SSSP). The residue at position 900 (threonine 900) is a Phosphothreonine; by MAPK11. Serine 902 is modified (phosphoserine; by MAPK11). A Phosphothreonine; by MAPK11 modification is found at threonine 984. Serine 997 is modified (phosphoserine). Serine 1001 and serine 1009 each carry phosphoserine; by MAPK11. Position 1035 is a phosphoserine (serine 1035). Polar residues predominate over residues 1048-1068 (TITTGAGSAKQSPSSKHSPLT). Serine 1093 carries the post-translational modification Phosphoserine. Serine 1104 is modified (phosphoserine; by MAPK11). The segment covering 1118-1128 (TQPSGSPLNLN) has biased composition (polar residues). Over residues 1158-1171 (QDHDQPPVLKKERP) the composition is skewed to basic and acidic residues. Positions 1172–1184 (LSQTNGAHYSPLT) are enriched in polar residues. Positions 1185-1195 (SDEEPGSEDEP) are enriched in acidic residues. Phosphoserine occurs at positions 1213 and 1246. Positions 1334–1410 (GASLPHKGPE…DKTPLLSGKA (77 aa)) are disordered.

It belongs to the class I-like SAM-binding methyltransferase superfamily. DOT1 family. In terms of assembly, interacts with MLLT10.

It localises to the nucleus. The catalysed reaction is L-lysyl(79)-[histone H3] + 3 S-adenosyl-L-methionine = N(6),N(6),N(6)-trimethyl-L-lysyl(79)-[histone H3] + 3 S-adenosyl-L-homocysteine + 3 H(+). Its function is as follows. Histone methyltransferase. Methylates 'Lys-79' of histone H3. Nucleosomes are preferred as substrate compared to free histones. Binds to DNA. The polypeptide is Histone-lysine N-methyltransferase, H3 lysine-79 specific (Homo sapiens (Human)).